The following is an 819-amino-acid chain: Glycine-rich domain-containing protein 1 (819 aa).

Its function is as follows. Plays a regulatory role in abscisic acid (ABA) signaling and tolerance to abiotic stress during germination. May be involved in the regulation of the ABI transcriptional factors. The chain is Glycine-rich domain-containing protein 1 from Arabidopsis thaliana (Mouse-ear cress).